The chain runs to 430 residues: Enolase (430 aa).

Position 164 (Q164) interacts with (2R)-2-phosphoglycerate. E208 (proton donor) is an active-site residue. Mg(2+)-binding residues include D245, E288, and D315. K340, R369, S370, and K391 together coordinate (2R)-2-phosphoglycerate. Catalysis depends on K340, which acts as the Proton acceptor.

Belongs to the enolase family. The cofactor is Mg(2+).

Its subcellular location is the cytoplasm. It localises to the secreted. It is found in the cell surface. It catalyses the reaction (2R)-2-phosphoglycerate = phosphoenolpyruvate + H2O. It participates in carbohydrate degradation; glycolysis; pyruvate from D-glyceraldehyde 3-phosphate: step 4/5. Its function is as follows. Catalyzes the reversible conversion of 2-phosphoglycerate (2-PG) into phosphoenolpyruvate (PEP). It is essential for the degradation of carbohydrates via glycolysis. The protein is Enolase of Thermococcus kodakarensis (strain ATCC BAA-918 / JCM 12380 / KOD1) (Pyrococcus kodakaraensis (strain KOD1)).